Reading from the N-terminus, the 92-residue chain is Large ribosomal subunit protein uL23c (92 aa).

It belongs to the universal ribosomal protein uL23 family. Part of the 50S ribosomal subunit.

The protein localises to the plastid. The protein resides in the chloroplast. Binds to 23S rRNA. This is Large ribosomal subunit protein uL23c (rpl23) from Chara vulgaris (Common stonewort).